The sequence spans 247 residues: 3-oxoacyl-[acyl-carrier-protein] reductase (247 aa).

NADP(+) is bound at residue 11–35 (VTGASRGIGKATALALAATGMKVVV). Ser-143 provides a ligand contact to substrate. Tyr-156 (proton acceptor) is an active-site residue.

The protein belongs to the short-chain dehydrogenases/reductases (SDR) family.

The catalysed reaction is a (3R)-hydroxyacyl-[ACP] + NADP(+) = a 3-oxoacyl-[ACP] + NADPH + H(+). The protein operates within lipid metabolism; fatty acid biosynthesis. Functionally, catalyzes the NADPH-dependent reduction of beta-ketoacyl-ACP substrates to beta-hydroxyacyl-ACP products, the first reductive step in the elongation cycle of fatty acid biosynthesis. Is capable of reducing acetoacetyl-CoA, but less well than its paralog PhaB. This chain is 3-oxoacyl-[acyl-carrier-protein] reductase (fabG), found in Synechocystis sp. (strain ATCC 27184 / PCC 6803 / Kazusa).